The chain runs to 713 residues: Histone-lysine N-methyltransferase SETDB2 (713 aa).

The segment at 78 to 109 is disordered; it reads PEVNTHRSNHTPVTQSEQENKSSAVPSASCDN. Positions 87–109 are enriched in polar residues; it reads HTPVTQSEQENKSSAVPSASCDN. The MBD domain maps to 161-233; that stretch reads LSLKGENPLQ…DNFSFNTYVQ (73 aa). In terms of domain architecture, Pre-SET spans 294–367; that stretch reads DSCDCSEGCI…MCQNRVIQHG (74 aa). 9 residues coordinate Zn(2+): cysteine 296, cysteine 298, cysteine 302, cysteine 308, cysteine 310, cysteine 348, cysteine 352, cysteine 354, and cysteine 359. The 319-residue stretch at 370-688 folds into the SET domain; the sequence is VRLQVFKSEK…ARTELTWDYG (319 aa). 380 to 382 contributes to the S-adenosyl-L-methionine binding site; that stretch reads KGW. Basic and acidic residues-rich tracts occupy residues 511–534 and 579–592; these read EDKNGFKPAQEHVNSEARRAHEDL and TKQVLEVPGKKSQE. 2 disordered regions span residues 511 to 549 and 579 to 608; these read EDKNGFKPAQEHVNSEARRAHEDLSSNPAGDSEDTQLTE and TKQVLEVPGKKSQEEEPAASQSQQALCDEE. Residues arginine 642 and 645–646 contribute to the S-adenosyl-L-methionine site; that span reads NH. Residues cysteine 648, cysteine 701, cysteine 703, and cysteine 708 each contribute to the Zn(2+) site.

The protein belongs to the class V-like SAM-binding methyltransferase superfamily.

Its subcellular location is the nucleus. It localises to the chromosome. The enzyme catalyses N(6),N(6)-dimethyl-L-lysyl(9)-[histone H3] + S-adenosyl-L-methionine = N(6),N(6),N(6)-trimethyl-L-lysyl(9)-[histone H3] + S-adenosyl-L-homocysteine + H(+). Functionally, histone methyltransferase involved in left-right axis specification in early development and mitosis. Specifically trimethylates 'Lys-9' of histone H3 (H3K9me3). H3K9me3 is a specific tag for epigenetic transcriptional repression that recruits HP1 (CBX1, CBX3 and/or CBX5) proteins to methylated histones. Contributes to H3K9me3 in both the interspersed repetitive elements and centromere-associated repeats. Plays a role in chromosome condensation and segregation during mitosis. This Mus musculus (Mouse) protein is Histone-lysine N-methyltransferase SETDB2 (Setdb2).